Consider the following 1012-residue polypeptide: MGSGGTGLLGTEWPLPLLLLFIMGGEALDSPPQILVHPQDQLLQGSGPAKMRCRSSGQPPPTIRWLLNGQPLSMATPDLHYLLPDGTLLLHRPSVQGRPQDDQNILSAILGVYTCEASNRLGTAVSRGARLSVAVLQEDFQIQPRDTVAVVGESLVLECGPPWGYPKPSVSWWKDGKPLVLQPGRRTVSGDSLMVSRAEKNDSGTYMCMATNNAGQRESRAARVSIQESQDHKEHLELLAVRIQLENVTLLNPEPVKGPKPGPSVWLSWKVSGPAAPAESYTALFRTQRSPRDQGSPWTEVLLRGLQSAKLGGLHWGQDYEFKVRPSSGRARGPDSNVLLLRLPEQVPSAPPQGVTLRSGNGSVFVSWAPPPAESHNGVIRGYQVWSLGNASLPAANWTVVGEQTQLEIATRLPGSYCVQVAAVTGAGAGELSTPVCLLLEQAMEQSARDPRKHVPWTLEQLRATLRRPEVIASSAVLLWLLLLGITVCIYRRRKAGVHLGPGLYRYTSEDAILKHRMDHSDSPWLADTWRSTSGSRDLSSSSSLSSRLGLDPRDPLEGRRSLISWDPRSPGVPLLPDTSTFYGSLIAEQPSSPPVRPSPKTPAARRFPSKLAGTSSPWASSDSLCSRRGLCSPRMSLTPTEAWKAKKKQELHQANSSPLLRGSHPMEIWAWELGSRASKNLSQSPGPNSGSPGEAPRAVVSWRAVGPQLHRNSSELASRPLPPTPLSLRGASSHDPQSQCVEKLQAPSSDPLPAAPLSVLNSSRPSSPQASFLSCPSPSSSNLSSSSLSSLEEEEDQDSVLTPEEVALCLELSDGEETPTNSVSPMPRAPSPPTTYGYISIPTCSGLADMGRAGGGVGSEVGNLLYPPRPCPTPTPSEGSLANGWGSASEDNVPSARASLVSSSDGSFLADTHFARALAVAVDSFGLSLDPREADCVFTDASSPPSPRGDLSLTRSFSLPLWEWRPDWLEDAEISHTQRLGRGLPPWPPDSRASSQRSWLTGAVPKAGDSS.

Residues Met-1 to Ala-27 form the signal peptide. Ig-like C2-type domains lie at Pro-32–Ser-132 and Glu-138–Ser-225. 2 disulfides stabilise this stretch: Cys-53/Cys-115 and Cys-159/Cys-208. Asn-201 and Asn-247 each carry an N-linked (GlcNAc...) asparagine glycan. Fibronectin type-III domains follow at residues Thr-249–Gln-346 and Pro-348–Ala-443. Residues Asn-361, Asn-390, and Asn-397 are each glycosylated (N-linked (GlcNAc...) asparagine). Disordered stretches follow at residues Thr-533–Pro-553 and Leu-586–Ser-616. The segment covering Ser-534–Gly-550 has biased composition (low complexity). Positions Ser-592 to Lys-601 are enriched in pro residues. N-linked (GlcNAc...) asparagine glycosylation is found at Asn-681 and Asn-713. The disordered stretch occupies residues His-711–Val-801. A compositionally biased stretch (low complexity) spans Leu-745–Ser-759. Over residues Val-760–Ala-771 the composition is skewed to polar residues. Residues Asn-762 and Asn-783 are each glycosylated (N-linked (GlcNAc...) asparagine). Positions Ser-772–Ser-791 are enriched in low complexity. 2 positions are modified to phosphoserine: Ser-814 and Ser-947. Residues Arg-980–Ser-1012 form a disordered region.

Belongs to the immunoglobulin superfamily. ROBO family. As to quaternary structure, interacts with SLIT2 and ENAH. Expressed specifically in embryo and adult vascular endothelium.

Receptor for Slit proteins, at least for SLIT2, and seems to be involved in angiogenesis and vascular patterning. May mediate the inhibition of primary endothelial cell migration by Slit proteins. Involved in the maintenance of endothelial barrier organization and function. The sequence is that of Roundabout homolog 4 (Robo4) from Mus musculus (Mouse).